The following is a 432-amino-acid chain: Glutamate-1-semialdehyde 2,1-aminomutase (432 aa).

K272 carries the N6-(pyridoxal phosphate)lysine modification.

This sequence belongs to the class-III pyridoxal-phosphate-dependent aminotransferase family. HemL subfamily. In terms of assembly, homodimer. Pyridoxal 5'-phosphate is required as a cofactor.

It is found in the cytoplasm. The catalysed reaction is (S)-4-amino-5-oxopentanoate = 5-aminolevulinate. The protein operates within porphyrin-containing compound metabolism; protoporphyrin-IX biosynthesis; 5-aminolevulinate from L-glutamyl-tRNA(Glu): step 2/2. It participates in porphyrin-containing compound metabolism; chlorophyll biosynthesis. This chain is Glutamate-1-semialdehyde 2,1-aminomutase, found in Nostoc punctiforme (strain ATCC 29133 / PCC 73102).